Here is a 98-residue protein sequence, read N- to C-terminus: NADH-ubiquinone oxidoreductase chain 4L (98 aa).

3 consecutive transmembrane segments (helical) span residues 1 to 21 (MIPTYMNIMLAFTISLLGMLT), 29 to 49 (SLLCLEGMMMSLFIMTTLIAL), and 61 to 81 (IILLVFAACEAAVGLALLVSI).

This sequence belongs to the complex I subunit 4L family. As to quaternary structure, core subunit of respiratory chain NADH dehydrogenase (Complex I) which is composed of 45 different subunits.

It localises to the mitochondrion inner membrane. It carries out the reaction a ubiquinone + NADH + 5 H(+)(in) = a ubiquinol + NAD(+) + 4 H(+)(out). Functionally, core subunit of the mitochondrial membrane respiratory chain NADH dehydrogenase (Complex I) which catalyzes electron transfer from NADH through the respiratory chain, using ubiquinone as an electron acceptor. Part of the enzyme membrane arm which is embedded in the lipid bilayer and involved in proton translocation. The sequence is that of NADH-ubiquinone oxidoreductase chain 4L (MT-ND4L) from Macaca ochreata subsp. brunnescens (Muna-buton macaque).